We begin with the raw amino-acid sequence, 238 residues long: Leucine-rich repeat-containing protein 57 (238 aa).

LRR repeat units follow at residues 39 to 60 (NLRT…MGKF), 62 to 84 (LLKS…CKLK), 85 to 106 (KLET…FVQL), 108 to 129 (ALKT…LFKL), 131 to 152 (NLDV…VSGL), 153 to 175 (QAIE…SHCP), 176 to 196 (RLKV…PPSI), and 201 to 221 (QISL…RDLE).

In Xenopus laevis (African clawed frog), this protein is Leucine-rich repeat-containing protein 57 (lrrc57).